The chain runs to 243 residues: 1-(5-phosphoribosyl)-5-[(5-phosphoribosylamino)methylideneamino] imidazole-4-carboxamide isomerase (243 aa).

The active-site Proton acceptor is D8. D130 acts as the Proton donor in catalysis.

The protein belongs to the HisA/HisF family.

The protein resides in the cytoplasm. The enzyme catalyses 1-(5-phospho-beta-D-ribosyl)-5-[(5-phospho-beta-D-ribosylamino)methylideneamino]imidazole-4-carboxamide = 5-[(5-phospho-1-deoxy-D-ribulos-1-ylimino)methylamino]-1-(5-phospho-beta-D-ribosyl)imidazole-4-carboxamide. Its pathway is amino-acid biosynthesis; L-histidine biosynthesis; L-histidine from 5-phospho-alpha-D-ribose 1-diphosphate: step 4/9. This is 1-(5-phosphoribosyl)-5-[(5-phosphoribosylamino)methylideneamino] imidazole-4-carboxamide isomerase from Acinetobacter baumannii (strain AB307-0294).